We begin with the raw amino-acid sequence, 209 residues long: Ribosomal RNA large subunit methyltransferase E (209 aa).

Gly-63, Trp-65, Asp-83, Asp-99, and Asp-124 together coordinate S-adenosyl-L-methionine. Lys-164 serves as the catalytic Proton acceptor.

The protein belongs to the class I-like SAM-binding methyltransferase superfamily. RNA methyltransferase RlmE family.

The protein resides in the cytoplasm. The enzyme catalyses uridine(2552) in 23S rRNA + S-adenosyl-L-methionine = 2'-O-methyluridine(2552) in 23S rRNA + S-adenosyl-L-homocysteine + H(+). Specifically methylates the uridine in position 2552 of 23S rRNA at the 2'-O position of the ribose in the fully assembled 50S ribosomal subunit. The polypeptide is Ribosomal RNA large subunit methyltransferase E (Pseudoalteromonas translucida (strain TAC 125)).